Here is a 753-residue protein sequence, read N- to C-terminus: Polyribonucleotide nucleotidyltransferase (753 aa).

Mg(2+) is bound by residues Asp488 and Asp494. The KH domain occupies 555 to 614; it reads PRLLRTKISPDKIGALIGPGGKNIRGIQETTGAVIEVDDEGTVLVASSNKESAQEAMRQV. The region spanning 624–692 is the S1 motif domain; that stretch reads GKIYDGTVSS…EHDRVKLSRR (69 aa). The segment covering 698–719 has biased composition (acidic residues); the sequence is LGEEDPLAVEGEGGGDSEGGGD. Residues 698 to 753 form a disordered region; that stretch reads LGEEDPLAVEGEGGGDSEGGGDGEDRPRRRRGGSGGGGGGGRGRGPRRSGGGRDRD. The span at 730–740 shows a compositional bias: gly residues; sequence GSGGGGGGGRG.

It belongs to the polyribonucleotide nucleotidyltransferase family. Mg(2+) is required as a cofactor.

It localises to the cytoplasm. The catalysed reaction is RNA(n+1) + phosphate = RNA(n) + a ribonucleoside 5'-diphosphate. In terms of biological role, involved in mRNA degradation. Catalyzes the phosphorolysis of single-stranded polyribonucleotides processively in the 3'- to 5'-direction. This is Polyribonucleotide nucleotidyltransferase from Rhodopirellula baltica (strain DSM 10527 / NCIMB 13988 / SH1).